Reading from the N-terminus, the 405-residue chain is CMP-sialic acid transporter 5 (405 aa).

Residues M1–N43 are Cytoplasmic-facing. The chain crosses the membrane as a helical span at residues V44–S64. The Lumenal segment spans residues K65 to P74. A helical transmembrane segment spans residues I75–I95. Residues Q96–A121 lie on the Cytoplasmic side of the membrane. Residues L122–L142 traverse the membrane as a helical segment. The Lumenal segment spans residues Y143–S147. Residues T148–M168 traverse the membrane as a helical segment. Residues K169–R171 lie on the Cytoplasmic side of the membrane. Residues F172–L192 form a helical membrane-spanning segment. Residues R193 to T200 are Lumenal-facing. A helical membrane pass occupies residues A201 to P221. Residues S222 to N244 lie on the Cytoplasmic side of the membrane. Residues L245–F265 traverse the membrane as a helical segment. The Lumenal portion of the chain corresponds to Q266–T281. Residues M282–A302 form a helical membrane-spanning segment. Residues D303–S322 are Cytoplasmic-facing. The chain crosses the membrane as a helical span at residues A323–I343. Residues S344–T405 lie on the Lumenal side of the membrane. The interval D368–T405 is disordered. The span at D389 to T405 shows a compositional bias: basic and acidic residues.

Belongs to the nucleotide-sugar transporter family. CMP-Sialate:CMP antiporter (TC 2.A.7.12) subfamily.

It localises to the golgi apparatus membrane. Sugar transporter involved in the transport of CMP-sialic acid from the cytoplasm into the Golgi. May transport important nucleotide sugars such as CMP-Kdo (2-keto-3-deoxy-D-manno-octulosonic acid) in physiological conditions. In Oryza sativa subsp. japonica (Rice), this protein is CMP-sialic acid transporter 5.